We begin with the raw amino-acid sequence, 333 residues long: tRNA dimethylallyltransferase (333 aa).

ATP is bound at residue 16–23 (GPTASGKT). 18–23 (TASGKT) contacts substrate. Interaction with substrate tRNA stretches follow at residues 41-44 (DSAL), 165-169 (QRISR), and 253-258 (RCVGYR).

Belongs to the IPP transferase family. Monomer. Requires Mg(2+) as cofactor.

The catalysed reaction is adenosine(37) in tRNA + dimethylallyl diphosphate = N(6)-dimethylallyladenosine(37) in tRNA + diphosphate. Functionally, catalyzes the transfer of a dimethylallyl group onto the adenine at position 37 in tRNAs that read codons beginning with uridine, leading to the formation of N6-(dimethylallyl)adenosine (i(6)A). The polypeptide is tRNA dimethylallyltransferase (Polaromonas sp. (strain JS666 / ATCC BAA-500)).